Here is a 207-residue protein sequence, read N- to C-terminus: Octanoyltransferase (207 aa).

The 177-residue stretch at 27–203 (ASTEDELWVV…HLETQFTPKA (177 aa)) folds into the BPL/LPL catalytic domain. Residues 66 to 73 (RGGQITYH), 133 to 135 (SLG), and 146 to 148 (GLA) contribute to the substrate site. Cys-164 serves as the catalytic Acyl-thioester intermediate.

The protein belongs to the LipB family.

It is found in the cytoplasm. It carries out the reaction octanoyl-[ACP] + L-lysyl-[protein] = N(6)-octanoyl-L-lysyl-[protein] + holo-[ACP] + H(+). The protein operates within protein modification; protein lipoylation via endogenous pathway; protein N(6)-(lipoyl)lysine from octanoyl-[acyl-carrier-protein]: step 1/2. Catalyzes the transfer of endogenously produced octanoic acid from octanoyl-acyl-carrier-protein onto the lipoyl domains of lipoate-dependent enzymes. Lipoyl-ACP can also act as a substrate although octanoyl-ACP is likely to be the physiological substrate. This is Octanoyltransferase from Neisseria meningitidis serogroup C / serotype 2a (strain ATCC 700532 / DSM 15464 / FAM18).